A 307-amino-acid chain; its full sequence is Oxygen-dependent coproporphyrinogen-III oxidase (307 aa).

Ser-99 is a substrate binding site. Residues His-103 and His-113 each coordinate a divalent metal cation. His-113 (proton donor) is an active-site residue. 115 to 117 contributes to the substrate binding site; the sequence is NVR. A divalent metal cation contacts are provided by His-152 and His-182. Residues 247 to 282 form an important for dimerization region; that stretch reads YVEFNLVFDRGTLFGLQSGGRTESILMSMPPVANWR. 265–267 provides a ligand contact to substrate; sequence GGR.

The protein belongs to the aerobic coproporphyrinogen-III oxidase family. In terms of assembly, homodimer. Requires a divalent metal cation as cofactor.

Its subcellular location is the cytoplasm. The catalysed reaction is coproporphyrinogen III + O2 + 2 H(+) = protoporphyrinogen IX + 2 CO2 + 2 H2O. Its pathway is porphyrin-containing compound metabolism; protoporphyrin-IX biosynthesis; protoporphyrinogen-IX from coproporphyrinogen-III (O2 route): step 1/1. Involved in the heme biosynthesis. Catalyzes the aerobic oxidative decarboxylation of propionate groups of rings A and B of coproporphyrinogen-III to yield the vinyl groups in protoporphyrinogen-IX. This is Oxygen-dependent coproporphyrinogen-III oxidase from Burkholderia lata (strain ATCC 17760 / DSM 23089 / LMG 22485 / NCIMB 9086 / R18194 / 383).